The sequence spans 496 residues: Probable malate:quinone oxidoreductase (496 aa).

Belongs to the MQO family. Requires FAD as cofactor.

The catalysed reaction is (S)-malate + a quinone = a quinol + oxaloacetate. Its pathway is carbohydrate metabolism; tricarboxylic acid cycle; oxaloacetate from (S)-malate (quinone route): step 1/1. This Prochlorococcus marinus (strain NATL2A) protein is Probable malate:quinone oxidoreductase.